Consider the following 673-residue polypeptide: MNLLPKTREEFAQTDYWNEFFKKRGEKAFEWYGEYLDLCDHIHKYIKPVDKILMLGCGNSKLSMDMYDSEYRDITNIDISPVAVKKMLEQNARTRPDMKFLQMDATAMTFPDESFSVALDKGTLDALFVDDAPETKAVVENYFKEILRTMRNGGRYFCVSLLQEHILNFLVEFLPRHNCMLRIVHCLGVEQANKEKNADDAMKMPVFVVIATKFKSLPMPILEFGLGNDKMQRFTESSELSNAVRSVQKAALVFNGLARSSIAGHDEVTLDLYRPSENTPRYSIYILDQAAARGLNKYAAFIVPQGREIEWLFGTPSGRKKLQASAKFQRLAVVTLHRDQVYNTLEEVQAELGDTVFSLAPHGHIKQIPYLSLGSDVGKRETLISGFSKISGEFRIEEVEAGGKTLRRLIFLSNQFVVQSEALVKTIKIKGKKERKKIDFGYLACQHHLYMSVGVQLATTLQNPKKDVQKDVLVIGLGGGGLCSFLHAALPQSRITAVEIDPIMLEVAEQYFELKQDKRFHVVIDDGLAFVERCRNEDIHFDAVLFDVDSKDLSLGMSCPPQGFLAHDVLLHIKEIIGPKGLFMLNLVCRDETLKTEAIANLQKVFPAVCSYKLEEDINEVVYCANDEKYKTVEHWQKAMGTAGRGLNTTIKEHKLASEDPLEVAEFLSELKL.

Belongs to the methyltransferase superfamily.

The catalysed reaction is L-lysyl-[protein] + S-adenosyl-L-methionine = N(6)-methyl-L-lysyl-[protein] + S-adenosyl-L-homocysteine + H(+). The enzyme catalyses N(6)-methyl-L-lysyl-[protein] + S-adenosyl-L-methionine = N(6),N(6)-dimethyl-L-lysyl-[protein] + S-adenosyl-L-homocysteine + H(+). It catalyses the reaction N-terminal glycyl-L-lysyl-L-glutamyl-[protein] + 3 S-adenosyl-L-methionine = N-terminal N,N,N-trimethyl-glycyl-L-lysyl-L-glutamyl-[protein] + 3 S-adenosyl-L-homocysteine + 3 H(+). Its function is as follows. Dual methyltransferase. It catalyzes N-terminal methylation of target proteins via its C-terminus. It catalyzes dimethylation on lysine residues of target proteins via its N-terminus. The chain is eEF1A lysine and N-terminal methyltransferase homolog from Drosophila pseudoobscura pseudoobscura (Fruit fly).